The sequence spans 101 residues: Small ribosomal subunit protein uS14 (101 aa).

The protein belongs to the universal ribosomal protein uS14 family. Part of the 30S ribosomal subunit. Contacts proteins S3 and S10.

In terms of biological role, binds 16S rRNA, required for the assembly of 30S particles and may also be responsible for determining the conformation of the 16S rRNA at the A site. The protein is Small ribosomal subunit protein uS14 of Janthinobacterium sp. (strain Marseille) (Minibacterium massiliensis).